We begin with the raw amino-acid sequence, 114 residues long: Type 4 adapter protein IcmS (114 aa).

As to quaternary structure, the T4BSS is a complex nanomachine composed of several subcomplexes. This subunit is part of the Type IV Coupling Complex (T4CC), a subcomplex composed of the DotLMNYZ core and the IcmSW-LvgA adapter subunits, linked by the C-terminal tail of DotL. Interacts with IcmW. IcmS and IcmW form a stable complex. Interacts directly with the type 4 coupling protein DotL. Interacts with LvgA. Interacts with effector proteins.

Its subcellular location is the cytoplasm. With respect to regulation, interaction with DotL is critical for the export of IcmSW-dependent substrates. Functionally, component of the Dot/Icm type IVB secretion system (T4BSS), which is used to inject bacterial effector proteins into eukaryotic host cells. Part of a subcomplex which recruits effector proteins and delivers them to the core transmembrane subcomplex. The IcmS/IcmW protein complex plays an important role in protein translocation by interacting with multiple Dot/Icm effector proteins to facilitate their translocation into host cells. Interaction promotes conformational changes in the effector protein, which may facilitate display of a C-terminal translocation signal. May maintain the substrates in a translocation competent form. Required for intracellular growth in host cells, replicative phagosome formation and phagosome trafficking. IcmS is required for IcmW stability. In Legionella pneumophila subsp. pneumophila (strain Philadelphia 1 / ATCC 33152 / DSM 7513), this protein is Type 4 adapter protein IcmS.